The sequence spans 520 residues: Probable glycerol-3-phosphate acyltransferase 3 (520 aa).

The next 5 membrane-spanning stretches (helical) occupy residues isoleucine 5 to leucine 20, tyrosine 64 to leucine 84, isoleucine 88 to isoleucine 108, threonine 264 to alanine 284, and leucine 286 to cysteine 306. An HXXXXD motif motif is present at residues histidine 334–aspartate 339.

This sequence belongs to the GPAT/DAPAT family. As to expression, widely expressed at low level. Expressed at higher level in seedlings and leaves.

The protein resides in the membrane. The catalysed reaction is sn-glycerol 3-phosphate + an acyl-CoA = a 1-acyl-sn-glycero-3-phosphate + CoA. Its pathway is phospholipid metabolism; CDP-diacylglycerol biosynthesis; CDP-diacylglycerol from sn-glycerol 3-phosphate: step 1/3. In terms of biological role, esterifies acyl-group from acyl-ACP to the sn-1 position of glycerol-3-phosphate, an essential step in glycerolipid biosynthesis. This Arabidopsis thaliana (Mouse-ear cress) protein is Probable glycerol-3-phosphate acyltransferase 3 (GPAT3).